Reading from the N-terminus, the 595-residue chain is 73 kDa paraflagellar rod protein (595 aa).

The tract at residues D294–D317 is disordered. The interval D317–G337 is calmodulin-binding.

As to quaternary structure, heterodimer of a 69 kDa and a 73 kDa protein.

The protein resides in the cell projection. The protein localises to the cilium. It is found in the flagellum. Its subcellular location is the cytoplasm. It localises to the cytoskeleton. Its function is as follows. Major component of the paraflagellar rod (PFR). The PFR is a highly ordered lattices of fibrous proteins that are located inside the flagellum and assume a fixed orientation with respect to the microtubular axoneme. This is 73 kDa paraflagellar rod protein (PFRC) from Trypanosoma brucei brucei.